The chain runs to 292 residues: General transcription factor IIE subunit 2 (292 aa).

Met1 bears the N-acetylmethionine mark. Residues 17 to 64 (LSTPVVEKRAVPSESPSSSSSKKKKAKVEHGGSSGSKQNSDHNNGSFN) form a disordered region. Positions 51 to 63 (GSKQNSDHNNGSF) are enriched in polar residues. A Phosphoserine modification is found at Ser62. A DNA-binding region (TFIIE beta) is located at residues 67–147 (ALSGSSGYKF…YAFKPKYNLK (81 aa)). N6-acetyllysine is present on Lys75. Residues 245-277 (SMQESGPKKVASIQRRKKPASQKKRRFKTHNEH) are disordered. A compositionally biased stretch (basic residues) spans 258-272 (QRRKKPASQKKRRFK).

The protein belongs to the TFIIE beta subunit family. In terms of assembly, tetramer of two alpha and two beta chains. Interacts with FACT subunit SUPT16H. Interacts with ATF7IP. Interacts with SND1. Part of TBP-based Pol II pre-initiation complex (PIC), in which Pol II core assembles with general transcription factors and other specific initiation factors including GTF2E1, GTF2E2, GTF2F1, GTF2F2, TCEA1, ERCC2, ERCC3, GTF2H2, GTF2H3, GTF2H4, GTF2H5, GTF2A1, GTF2A2, GTF2B and TBP; this large multi-subunit PIC complex mediates DNA unwinding and targets Pol II core to the transcription start site where the first phosphodiester bond forms.

It is found in the nucleus. In terms of biological role, recruits TFIIH to the initiation complex and stimulates the RNA polymerase II C-terminal domain kinase and DNA-dependent ATPase activities of TFIIH. Both TFIIH and TFIIE are required for promoter clearance by RNA polymerase. The chain is General transcription factor IIE subunit 2 (Gtf2e2) from Mus musculus (Mouse).